We begin with the raw amino-acid sequence, 245 residues long: 4-hydroxy-tetrahydrodipicolinate reductase (245 aa).

NAD(+) contacts are provided by residues 7–12 (GAKGKV), 75–77 (GTT), and 102–105 (APNF). The active-site Proton donor/acceptor is the histidine 132. Histidine 133 lines the (S)-2,3,4,5-tetrahydrodipicolinate pocket. The Proton donor role is filled by lysine 136. 142–143 (GT) contributes to the (S)-2,3,4,5-tetrahydrodipicolinate binding site.

This sequence belongs to the DapB family.

It is found in the cytoplasm. The enzyme catalyses (S)-2,3,4,5-tetrahydrodipicolinate + NAD(+) + H2O = (2S,4S)-4-hydroxy-2,3,4,5-tetrahydrodipicolinate + NADH + H(+). The catalysed reaction is (S)-2,3,4,5-tetrahydrodipicolinate + NADP(+) + H2O = (2S,4S)-4-hydroxy-2,3,4,5-tetrahydrodipicolinate + NADPH + H(+). The protein operates within amino-acid biosynthesis; L-lysine biosynthesis via DAP pathway; (S)-tetrahydrodipicolinate from L-aspartate: step 4/4. Its function is as follows. Catalyzes the conversion of 4-hydroxy-tetrahydrodipicolinate (HTPA) to tetrahydrodipicolinate. The sequence is that of 4-hydroxy-tetrahydrodipicolinate reductase from Mycobacterium sp. (strain KMS).